The sequence spans 247 residues: Homeobox-leucine zipper protein HOX17 (247 aa).

A disordered region spans residues 58-81; sequence ERAGLRGGGGSDEEDGGCGIDGSR. The segment at residues 79-138 is a DNA-binding region (homeobox); sequence GSRKKLRLSKDQSAVLEDSFREHPTLNPRQKATLAQQLGLRPRQVEVWFQNRRARTKLKQ. A leucine-zipper region spans residues 137 to 182; that stretch reads KQTEVDCEFLKRCCETLTEENRRLQKEVQELRALKLVSPHLYMNMS.

Belongs to the HD-ZIP homeobox family. Class II subfamily. Expressed in seedlings, roots, stems, leaf sheaths and blades and panicles.

It is found in the nucleus. In terms of biological role, probable transcription factor. The sequence is that of Homeobox-leucine zipper protein HOX17 (HOX17) from Oryza sativa subsp. indica (Rice).